The primary structure comprises 242 residues: Probable 2-phosphosulfolactate phosphatase (242 aa).

Belongs to the ComB family. The cofactor is Mg(2+).

It carries out the reaction (2R)-O-phospho-3-sulfolactate + H2O = (2R)-3-sulfolactate + phosphate. The polypeptide is Probable 2-phosphosulfolactate phosphatase (Picosynechococcus sp. (strain ATCC 27264 / PCC 7002 / PR-6) (Agmenellum quadruplicatum)).